The chain runs to 371 residues: 4-hydroxy-3-methylbut-2-en-1-yl diphosphate synthase (flavodoxin) (371 aa).

4 residues coordinate [4Fe-4S] cluster: Cys270, Cys273, Cys305, and Glu312.

It belongs to the IspG family. The cofactor is [4Fe-4S] cluster.

The enzyme catalyses (2E)-4-hydroxy-3-methylbut-2-enyl diphosphate + oxidized [flavodoxin] + H2O + 2 H(+) = 2-C-methyl-D-erythritol 2,4-cyclic diphosphate + reduced [flavodoxin]. The protein operates within isoprenoid biosynthesis; isopentenyl diphosphate biosynthesis via DXP pathway; isopentenyl diphosphate from 1-deoxy-D-xylulose 5-phosphate: step 5/6. Its function is as follows. Converts 2C-methyl-D-erythritol 2,4-cyclodiphosphate (ME-2,4cPP) into 1-hydroxy-2-methyl-2-(E)-butenyl 4-diphosphate. The chain is 4-hydroxy-3-methylbut-2-en-1-yl diphosphate synthase (flavodoxin) from Shewanella sp. (strain ANA-3).